Consider the following 157-residue polypeptide: Transcriptional repressor NrdR (157 aa).

The span at 1–11 (MQCPSCQNTDS) shows a compositional bias: polar residues. A disordered region spans residues 1-21 (MQCPSCQNTDSRVLESRSADT). The segment at 3–34 (CPSCQNTDSRVLESRSADTGKSVRRRRECLNC) is a zinc-finger region. One can recognise an ATP-cone domain in the interval 49-139 (ITVIKRSESK…VYRQFNGIND (91 aa)).

The protein belongs to the NrdR family. The cofactor is Zn(2+).

Functionally, negatively regulates transcription of bacterial ribonucleotide reductase nrd genes and operons by binding to NrdR-boxes. The polypeptide is Transcriptional repressor NrdR (Prochlorococcus marinus (strain MIT 9211)).